A 157-amino-acid polypeptide reads, in one-letter code: Thiosulfate sulfurtransferase/rhodanese-like domain-containing protein 3 (157 aa).

Residues 52–154 (NSKDIMLIDV…WVTYEISEEK (103 aa)) form the Rhodanese domain. An N6-succinyllysine modification is found at Lys-96. Cys-114 serves as the catalytic Cysteine persulfide intermediate.

The sequence is that of Thiosulfate sulfurtransferase/rhodanese-like domain-containing protein 3 (Tstd3) from Mus musculus (Mouse).